We begin with the raw amino-acid sequence, 664 residues long: Probable LRR receptor-like serine/threonine-protein kinase At1g63430 (664 aa).

A signal peptide spans 1–22 (MRSKYFCSLALVLGLFFVSCDG). Residues 23 to 288 (FASNEVQALR…KHHRASKPKW (266 aa)) are Extracellular-facing. A glycan (N-linked (GlcNAc...) asparagine) is linked at Asn-75. 4 LRR repeats span residues 94-116 (YLQE…IGNL), 118-140 (NLKI…IGSL), 142-165 (GIMI…GNLK), and 166-178 (YLRE…NRLQ). N-linked (GlcNAc...) asparagine glycosylation is present at Asn-197. The helical transmembrane segment at 289–309 (LLALEIVTGSMVGLLLLVALF) threads the bilayer. At 310 to 664 (SAVHRWNNRS…LAWAELALDS (355 aa)) the chain is on the cytoplasmic side. The Protein kinase domain occupies 360–642 (EDFSNIIGLS…ELCETLESRI (283 aa)).

Belongs to the protein kinase superfamily. Ser/Thr protein kinase family.

The protein localises to the cell membrane. It carries out the reaction L-seryl-[protein] + ATP = O-phospho-L-seryl-[protein] + ADP + H(+). It catalyses the reaction L-threonyl-[protein] + ATP = O-phospho-L-threonyl-[protein] + ADP + H(+). This is Probable LRR receptor-like serine/threonine-protein kinase At1g63430 from Arabidopsis thaliana (Mouse-ear cress).